The following is a 314-amino-acid chain: Cytochrome b558/566 subunit B (314 aa).

The next 8 membrane-spanning stretches (helical) occupy residues Leu47–Ser67, Ser76–Tyr96, Leu102–Ile122, Leu127–Leu147, Leu155–Ile175, Tyr186–Ile206, His233–Ile253, and Phe264–Leu284.

It localises to the cell membrane. In Saccharolobus solfataricus (strain ATCC 35092 / DSM 1617 / JCM 11322 / P2) (Sulfolobus solfataricus), this protein is Cytochrome b558/566 subunit B (cbsB).